Here is a 275-residue protein sequence, read N- to C-terminus: Large ribosomal subunit protein uL2 (275 aa).

Residues 224 to 275 (AMNPVDHPHGGGEGKAPIGHPGPLTPWGKPALGYKTRKKGKASDKFIIRRRK) form a disordered region. Positions 264 to 275 (KASDKFIIRRRK) are enriched in basic and acidic residues.

It belongs to the universal ribosomal protein uL2 family. In terms of assembly, part of the 50S ribosomal subunit. Forms a bridge to the 30S subunit in the 70S ribosome.

Functionally, one of the primary rRNA binding proteins. Required for association of the 30S and 50S subunits to form the 70S ribosome, for tRNA binding and peptide bond formation. It has been suggested to have peptidyltransferase activity; this is somewhat controversial. Makes several contacts with the 16S rRNA in the 70S ribosome. The chain is Large ribosomal subunit protein uL2 from Thermoanaerobacter pseudethanolicus (strain ATCC 33223 / 39E) (Clostridium thermohydrosulfuricum).